The sequence spans 247 residues: 2,3-bisphosphoglycerate-dependent phosphoglycerate mutase (247 aa).

Substrate contacts are provided by residues R13–N20, T26–G27, R65, E92–Y95, K103, R119–R120, and G186–N187. H14 serves as the catalytic Tele-phosphohistidine intermediate. The active-site Proton donor/acceptor is the E92.

The protein belongs to the phosphoglycerate mutase family. BPG-dependent PGAM subfamily. In terms of assembly, homotetramer, dimer of dimers.

The catalysed reaction is (2R)-2-phosphoglycerate = (2R)-3-phosphoglycerate. Its pathway is carbohydrate degradation; glycolysis; pyruvate from D-glyceraldehyde 3-phosphate: step 3/5. Its function is as follows. Catalyzes the interconversion of 2-phosphoglycerate and 3-phosphoglycerate. This Mycobacterium leprae (strain Br4923) protein is 2,3-bisphosphoglycerate-dependent phosphoglycerate mutase.